A 201-amino-acid polypeptide reads, in one-letter code: Small ribosomal subunit protein uS4 (201 aa).

The S4 RNA-binding domain occupies 93–153 (QRLDNIVYRL…EKSKNLVIIK (61 aa)).

It belongs to the universal ribosomal protein uS4 family. As to quaternary structure, part of the 30S ribosomal subunit. Contacts protein S5. The interaction surface between S4 and S5 is involved in control of translational fidelity.

One of the primary rRNA binding proteins, it binds directly to 16S rRNA where it nucleates assembly of the body of the 30S subunit. Its function is as follows. With S5 and S12 plays an important role in translational accuracy. The polypeptide is Small ribosomal subunit protein uS4 (Latilactobacillus sakei subsp. sakei (strain 23K) (Lactobacillus sakei subsp. sakei)).